Here is a 435-residue protein sequence, read N- to C-terminus: 3-ketoacyl-CoA thiolase (435 aa).

The active-site Acyl-thioester intermediate is C98. Active-site proton acceptor residues include H391 and C421.

It belongs to the thiolase-like superfamily. Thiolase family. As to quaternary structure, heterotetramer of two alpha chains (FadJ) and two beta chains (FadI).

It is found in the cytoplasm. It catalyses the reaction an acyl-CoA + acetyl-CoA = a 3-oxoacyl-CoA + CoA. The protein operates within lipid metabolism; fatty acid beta-oxidation. Functionally, catalyzes the final step of fatty acid oxidation in which acetyl-CoA is released and the CoA ester of a fatty acid two carbons shorter is formed. The polypeptide is 3-ketoacyl-CoA thiolase (Vibrio parahaemolyticus serotype O3:K6 (strain RIMD 2210633)).